Reading from the N-terminus, the 111-residue chain is Regulator of ribonuclease activity B (111 aa).

The protein belongs to the RraB family. As to quaternary structure, interacts with the C-terminal region of Rne.

The protein resides in the cytoplasm. Functionally, globally modulates RNA abundance by binding to RNase E (Rne) and regulating its endonucleolytic activity. Can modulate Rne action in a substrate-dependent manner by altering the composition of the degradosome. The sequence is that of Regulator of ribonuclease activity B from Pseudoalteromonas translucida (strain TAC 125).